A 316-amino-acid chain; its full sequence is Daunorubicin resistance ATP-binding protein DrrA3 (316 aa).

Positions 6–236 (ITVDGAEKRY…TGGDRIDVVL (231 aa)) constitute an ABC transporter domain. Position 38–45 (38–45 (GPNGAGKT)) interacts with ATP.

Belongs to the ABC transporter superfamily. Drug exporter-1 (DrugE1) (TC 3.A.1.105) family. The complex is probably composed of two ATP-binding proteins (DrrA3) and two transmembrane proteins (DrrB3).

It localises to the cell membrane. It catalyses the reaction daunorubicin(in) + ATP + H2O = daunorubicin(out) + ADP + phosphate + H(+). Part of the ABC transporter complex DrrA3B3 involved in daunorubicin efflux. Responsible for energy coupling to the transport system. Confers self-resistance to daunorubicin, an antibiotic produced by S.coeruleorubidus. The efficiency of DrrA3B3 to export daunorubicin is probably lower than that of DrrA1B1 or DrrA2B2. The protein is Daunorubicin resistance ATP-binding protein DrrA3 of Streptomyces coeruleorubidus.